The primary structure comprises 179 residues: Orotate phosphoribosyltransferase (179 aa).

5-phospho-alpha-D-ribose 1-diphosphate is bound by residues Arg-94, Lys-95, Lys-98, His-100, and 120–128 (EDTSTTGAS). Residues Thr-124 and Arg-152 each contribute to the orotate site.

This sequence belongs to the purine/pyrimidine phosphoribosyltransferase family. PyrE subfamily. In terms of assembly, homodimer. It depends on Mg(2+) as a cofactor.

It carries out the reaction orotidine 5'-phosphate + diphosphate = orotate + 5-phospho-alpha-D-ribose 1-diphosphate. The protein operates within pyrimidine metabolism; UMP biosynthesis via de novo pathway; UMP from orotate: step 1/2. In terms of biological role, catalyzes the transfer of a ribosyl phosphate group from 5-phosphoribose 1-diphosphate to orotate, leading to the formation of orotidine monophosphate (OMP). The sequence is that of Orotate phosphoribosyltransferase from Mycobacterium leprae (strain TN).